The primary structure comprises 218 residues: Glutathione S-transferase class-mu 26 kDa isozyme 51 (218 aa).

The GST N-terminal domain maps to 2–83 (PAKLGYWKIR…YIADKHGMLG (82 aa)). Residues 7–8 (YW), 41–45 (WFGDK), 54–55 (NL), and 67–68 (QS) contribute to the glutathione site. Positions 85–203 (TPEERARISM…ESEKFIKWPL (119 aa)) constitute a GST C-terminal domain. Substrate is bound at residue Tyr-111.

This sequence belongs to the GST superfamily. Mu family. Homodimer.

It is found in the cytoplasm. The catalysed reaction is RX + glutathione = an S-substituted glutathione + a halide anion + H(+). Its function is as follows. Conjugation of reduced glutathione to a wide number of exogenous and endogenous hydrophobic electrophiles. GST isoenzymes appear to play a central role in the parasite detoxification system. Other functions are also suspected including a role in increasing the solubility of haematin in the parasite gut. The chain is Glutathione S-transferase class-mu 26 kDa isozyme 51 from Fasciola hepatica (Liver fluke).